We begin with the raw amino-acid sequence, 296 residues long: Light-independent protochlorophyllide reductase iron-sulfur ATP-binding protein (296 aa).

ATP contacts are provided by residues G39–T44 and K68. Residue S43 participates in Mg(2+) binding. Residues C124 and C158 each coordinate [4Fe-4S] cluster. An ATP-binding site is contributed by N209 to R210.

The protein belongs to the NifH/BchL/ChlL family. Homodimer. Protochlorophyllide reductase is composed of three subunits; ChlL, ChlN and ChlB. Requires [4Fe-4S] cluster as cofactor.

The enzyme catalyses chlorophyllide a + oxidized 2[4Fe-4S]-[ferredoxin] + 2 ADP + 2 phosphate = protochlorophyllide a + reduced 2[4Fe-4S]-[ferredoxin] + 2 ATP + 2 H2O. Its pathway is porphyrin-containing compound metabolism; chlorophyll biosynthesis (light-independent). Its function is as follows. Component of the dark-operative protochlorophyllide reductase (DPOR) that uses Mg-ATP and reduced ferredoxin to reduce ring D of protochlorophyllide (Pchlide) to form chlorophyllide a (Chlide). This reaction is light-independent. The L component serves as a unique electron donor to the NB-component of the complex, and binds Mg-ATP. This chain is Light-independent protochlorophyllide reductase iron-sulfur ATP-binding protein, found in Prochlorococcus marinus (strain MIT 9303).